The sequence spans 73 residues: Protein BP4C (73 aa).

Pollen specific.

This Brassica napus (Rape) protein is Protein BP4C (BP4C).